The sequence spans 117 residues: Minor capsid protein VP2 (117 aa).

It belongs to the lagovirus VP2 protein family. In terms of assembly, homooligomer. The portal-like structure consists in 12 copies of VP2. Interacts with capsid protein VP1.

It localises to the virion. It is found in the host cytoplasm. Functionally, minor structural protein that forms a portal-like structure at a unique three-fold axis of symmetry, following binding to the host receptor. The channel formed by VP2 may allow the delivery of the viral genome through the host endosomal membrane. In Oryctolagus cuniculus (Rabbit), this protein is Minor capsid protein VP2.